A 153-amino-acid chain; its full sequence is Putative pre-16S rRNA nuclease (153 aa).

It belongs to the YqgF nuclease family.

It is found in the cytoplasm. Functionally, could be a nuclease involved in processing of the 5'-end of pre-16S rRNA. This is Putative pre-16S rRNA nuclease from Prochlorococcus marinus (strain AS9601).